Reading from the N-terminus, the 621-residue chain is uncharacterized protein (621 aa).

The next 3 helical transmembrane spans lie at 240–260 (FFDA…NLLW), 548–568 (LGIV…VWTV), and 587–607 (VIIG…LTFM).

It localises to the cell membrane. This is an uncharacterized protein from Mycoplasma pneumoniae (strain ATCC 29342 / M129 / Subtype 1) (Mycoplasmoides pneumoniae).